The chain runs to 398 residues: 1-aminocyclopropane-1-carboxylate oxidase homolog 5 (398 aa).

Residues 247–347 (KSHIMFGQYY…RISMPCFVST (101 aa)) enclose the Fe2OG dioxygenase domain. The Fe cation site is built by His-271, Asp-273, and His-327. 2-oxoglutarate is bound at residue Arg-338.

Belongs to the iron/ascorbate-dependent oxidoreductase family. Fe(2+) is required as a cofactor. As to expression, expressed in etiolated seedlings, leaves, stems and flowers.

The sequence is that of 1-aminocyclopropane-1-carboxylate oxidase homolog 5 (2A6) from Arabidopsis thaliana (Mouse-ear cress).